The sequence spans 273 residues: MDWLILLKALLLGIVEGLTEFLPISSTGHLILAGDLLNFNDDKAKVFTVAIQLGAILAVCWEYRERLVNIIRNLGTRQANRFVINLFIAFLPAAILGLLFIKTIKHYLFHPMPVAIALVTGGILILWAERREHRIEAETVDDMSWKQALQVGCAQCLALIPGTSRSGATIIGGLLFGLSRKAAAEFSFFLAIPVMFAATFYDVYKHREFLYIDDLGMFATGSVAAFISALIAIRGFIRYISHHDFTLFAWYRIGFGLIVLLTAYSGLVDWSVD.

7 helical membrane-spanning segments follow: residues 4–24 (LILL…FLPI), 43–63 (KAKV…CWEY), 82–102 (FVIN…LFIK), 108–128 (LFHP…ILWA), 183–203 (AAEF…FYDV), 217–237 (MFAT…RGFI), and 248–268 (FAWY…SGLV).

Belongs to the UppP family.

The protein localises to the cell inner membrane. The catalysed reaction is di-trans,octa-cis-undecaprenyl diphosphate + H2O = di-trans,octa-cis-undecaprenyl phosphate + phosphate + H(+). Its function is as follows. Catalyzes the dephosphorylation of undecaprenyl diphosphate (UPP). Confers resistance to bacitracin. This Nitrosomonas europaea (strain ATCC 19718 / CIP 103999 / KCTC 2705 / NBRC 14298) protein is Undecaprenyl-diphosphatase.